The chain runs to 134 residues: Arginine decarboxylase proenzyme (134 aa).

Catalysis depends on S82, which acts as the Schiff-base intermediate with substrate; via pyruvic acid. The residue at position 82 (S82) is a Pyruvic acid (Ser); by autocatalysis. H87 acts as the Proton acceptor; for processing activity in catalysis. C102 (proton donor; for catalytic activity) is an active-site residue.

It belongs to the prokaryotic AdoMetDC family. Type 1 subfamily. Heterooctamer of four alpha and four beta chains arranged as a tetramer of alpha/beta heterodimers. Pyruvate serves as cofactor. Is synthesized initially as an inactive proenzyme. Formation of the active enzyme involves a self-maturation process in which the active site pyruvoyl group is generated from an internal serine residue via an autocatalytic post-translational modification. Two non-identical subunits are generated from the proenzyme in this reaction, and the pyruvate is formed at the N-terminus of the alpha chain, which is derived from the carboxyl end of the proenzyme. The post-translation cleavage follows an unusual pathway, termed non-hydrolytic serinolysis, in which the side chain hydroxyl group of the serine supplies its oxygen atom to form the C-terminus of the beta chain, while the remainder of the serine residue undergoes an oxidative deamination to produce ammonia and the pyruvoyl group blocking the N-terminus of the alpha chain.

The catalysed reaction is L-arginine + H(+) = agmatine + CO2. The protein operates within amine and polyamine biosynthesis; agmatine biosynthesis; agmatine from L-arginine: step 1/1. Specifically catalyzes the decarboxylation of L-arginine to agmatine. Has no S-adenosylmethionine decarboxylase (AdoMetDC) activity. In Caldivirga maquilingensis (strain ATCC 700844 / DSM 13496 / JCM 10307 / IC-167), this protein is Arginine decarboxylase proenzyme.